Here is a 231-residue protein sequence, read N- to C-terminus: Small ribosomal subunit protein uS3 (231 aa).

The region spanning 39-107 is the KH type-2 domain; the sequence is IRKHIMKAIP…DVSLNIVEIR (69 aa).

Belongs to the universal ribosomal protein uS3 family. Part of the 30S ribosomal subunit. Forms a tight complex with proteins S10 and S14.

Functionally, binds the lower part of the 30S subunit head. Binds mRNA in the 70S ribosome, positioning it for translation. This is Small ribosomal subunit protein uS3 from Rhizorhabdus wittichii (strain DSM 6014 / CCUG 31198 / JCM 15750 / NBRC 105917 / EY 4224 / RW1) (Sphingomonas wittichii).